Consider the following 112-residue polypeptide: Nitrogen regulatory protein GlnK2 (112 aa).

ADP is bound by residues T29, 38–39, V64, and 87–90; these read QQ and GDGK. ATP-binding positions include T29, 38 to 39, V64, 87 to 90, and 101 to 103; these read QQ, GDGK, and RIR.

Belongs to the P(II) protein family. As to quaternary structure, homotrimer. Interacts and forms a complex with Amt2.

It localises to the cytoplasm. Binding of adenosine nucleotides results in distinct, cooperative behavior for ATP and ADP. GlnK2 is completely insensitive to 2-oxoglutarate at a low level of intracellular nitrogen. Functionally, involved in the regulation of nitrogen metabolism. Regulates the activity of its targets by protein-protein interaction in response to the nitrogen status of the cell. Regulates the activity of the ammonia channel Amt2 via direct interaction. This Archaeoglobus fulgidus (strain ATCC 49558 / DSM 4304 / JCM 9628 / NBRC 100126 / VC-16) protein is Nitrogen regulatory protein GlnK2.